We begin with the raw amino-acid sequence, 705 residues long: Elongation factor G (705 aa).

The tr-type G domain occupies His-8–Ala-290. GTP contacts are provided by residues Ala-17–Thr-24, Asp-88–His-92, and Asn-142–Asp-145.

The protein belongs to the TRAFAC class translation factor GTPase superfamily. Classic translation factor GTPase family. EF-G/EF-2 subfamily.

Its subcellular location is the cytoplasm. In terms of biological role, catalyzes the GTP-dependent ribosomal translocation step during translation elongation. During this step, the ribosome changes from the pre-translocational (PRE) to the post-translocational (POST) state as the newly formed A-site-bound peptidyl-tRNA and P-site-bound deacylated tRNA move to the P and E sites, respectively. Catalyzes the coordinated movement of the two tRNA molecules, the mRNA and conformational changes in the ribosome. The sequence is that of Elongation factor G from Xylella fastidiosa (strain M12).